Reading from the N-terminus, the 638-residue chain is Threonine--tRNA ligase (638 aa).

In terms of domain architecture, TGS spans 1–61 (MPDIKLPDGS…EQNADLAIIT (61 aa)). The interval 242 to 533 (DHRRLGKQYD…LIENFAGALP (292 aa)) is catalytic. Zn(2+) is bound by residues Cys333, His384, and His510.

Belongs to the class-II aminoacyl-tRNA synthetase family. Homodimer. Requires Zn(2+) as cofactor.

The protein localises to the cytoplasm. It catalyses the reaction tRNA(Thr) + L-threonine + ATP = L-threonyl-tRNA(Thr) + AMP + diphosphate + H(+). Its function is as follows. Catalyzes the attachment of threonine to tRNA(Thr) in a two-step reaction: L-threonine is first activated by ATP to form Thr-AMP and then transferred to the acceptor end of tRNA(Thr). Also edits incorrectly charged L-seryl-tRNA(Thr). The chain is Threonine--tRNA ligase from Dechloromonas aromatica (strain RCB).